Reading from the N-terminus, the 451-residue chain is MRECISIHVGQAGVQIGNACWELYCLEHGIQPDGQMPSDKTIGGGDDSFNTFFSETGAGKHVPRAVFVDLEPTVIDEVRTGTYRQLFHPEQLITGKEDAANNYARGHYTIGKEIIDLVLDRIRKLADQCTGLQGFSVFHSFGGGTGSGFTSLLMERLSVDYGKKSKLEFSIYPAPQVSTAVVEPYNSILTTHTTLEHSDCAFMVDNEAIYDICRRNLDIERPTYTNLNRLIGQIVSSITASLRFDGALNVDLTEFQTNLVPYPRAHFPLATYAPVISAEKAYHEQLSVAEITNACFEPANQMVKCDPRHGKYMACCLLYRGDVVPKDVNAAIATIKTKRTIQFVDWCPTGFKVGINYEPPTVVPGGDLAKVQRAVCMLSNTTAIAEAWARLDHKFDLMYAKRAFVHWYVGEGMEEGEFSEAREDMAALEKDYEEVGVDSVEGEGEEEGEEY.

GTP-binding residues include Gly10, Gln11, Ala12, and Gln15. N6-acetyllysine is present on Lys40. 13 residues coordinate GTP: Glu71, Ala99, Ser140, Gly143, Gly144, Thr145, Gly146, Thr179, Glu183, Asn206, Tyr224, Asn228, and Leu252. Glu71 lines the Mg(2+) pocket. Glu254 is a catalytic residue. Residue Tyr282 is modified to 3'-nitrotyrosine. Ser439 bears the Phosphoserine mark. A 5-glutamyl polyglutamate mark is found at Glu443 and Glu445. Tyr451 is subject to 3'-nitrotyrosine.

The protein belongs to the tubulin family. Heterodimer of alpha- and beta-tubulin. A typical microtubule is a hollow water-filled tube with an outer diameter of 25 nm and an inner diameter of 15 nM. Alpha-beta heterodimers associate head-to-tail to form protofilaments running lengthwise along the microtubule wall with the beta-tubulin subunit facing the microtubule plus end conferring a structural polarity. Microtubules usually have 13 protofilaments but different protofilament numbers can be found in some organisms and specialized cells. Interacts with gamma-tubulin; the interaction allows microtubules to nucleate from the gamma-tubulin ring complex (gTuRC). Nascent microtubule interacts (via alpha-tubulin MREC motif) with TTC5/STRAP; this interaction may result in tubulin mRNA-targeted degradation. Component of sperm flagellar doublet microtubules. Mg(2+) is required as a cofactor. Some glutamate residues at the C-terminus are polyglycylated, resulting in polyglycine chains on the gamma-carboxyl group. Glycylation is mainly limited to tubulin incorporated into axonemes (cilia and flagella) whereas glutamylation is prevalent in neuronal cells, centrioles, axonemes, and the mitotic spindle. Both modifications can coexist on the same protein on adjacent residues, and lowering polyglycylation levels increases polyglutamylation, and reciprocally. Cilia and flagella glycylation is required for their stability and maintenance. Flagella glycylation controls sperm motility. Post-translationally, some glutamate residues at the C-terminus are polyglutamylated, resulting in polyglutamate chains on the gamma-carboxyl group. Polyglutamylation plays a key role in microtubule severing by spastin (SPAST). SPAST preferentially recognizes and acts on microtubules decorated with short polyglutamate tails: severing activity by SPAST increases as the number of glutamates per tubulin rises from one to eight, but decreases beyond this glutamylation threshold. Glutamylation is also involved in cilia motility. In terms of processing, acetylation of alpha chains at Lys-40 is located inside the microtubule lumen. This modification has been correlated with increased microtubule stability, intracellular transport and ciliary assembly. Methylation of alpha chains at Lys-40 is found in mitotic microtubules and is required for normal mitosis and cytokinesis contributing to genomic stability. Post-translationally, nitration of Tyr-451 is irreversible and interferes with normal dynein intracellular distribution. In terms of processing, undergoes a tyrosination/detyrosination cycle, the cyclic removal and re-addition of a C-terminal tyrosine residue by the enzymes tubulin tyrosine carboxypeptidase (MATCAP1, VASH1 or VASH2) and tubulin tyrosine ligase (TTL), respectively. Tyrosination promotes microtubule interaction with CAP-Gly domain-containing proteins such as CLIP1, CLIP2 and DCTN1. Tyrosination regulates the initiation of dynein-dynactin motility via interaction with DCTN1, which brings the dynein-dynactin complex into contact with microtubules. In neurons, tyrosinated tubulins mediate the initiation of retrograde vesicle transport. Post-translationally, detyrosination is involved in metaphase plate congression by guiding chromosomes during mitosis: detyrosination promotes interaction with CENPE, promoting pole-proximal transport of chromosomes toward the equator. Detyrosination increases microtubules-dependent mechanotransduction in dystrophic cardiac and skeletal muscle. In cardiomyocytes, detyrosinated microtubules are required to resist to contractile compression during contraction: detyrosination promotes association with desmin (DES) at force-generating sarcomeres, leading to buckled microtubules and mechanical resistance to contraction.

Its subcellular location is the cytoplasm. The protein resides in the cytoskeleton. It is found in the flagellum axoneme. It carries out the reaction GTP + H2O = GDP + phosphate + H(+). Tubulin is the major constituent of microtubules, protein filaments consisting of alpha- and beta-tubulin heterodimers. Microtubules grow by the addition of GTP-tubulin dimers to the microtubule end, where a stabilizing cap forms. Below the cap, tubulin dimers are in GDP-bound state, owing to GTPase activity of alpha-tubulin. The chain is Tubulin alpha-1A chain (TUBA1A) from Sus scrofa (Pig).